The following is a 507-amino-acid chain: Bifunctional purine biosynthesis protein PurH (507 aa).

Positions 1–144 (MKRALLSVSD…KNSDSVWAVV (144 aa)) constitute an MGS-like domain.

This sequence belongs to the PurH family.

It catalyses the reaction (6R)-10-formyltetrahydrofolate + 5-amino-1-(5-phospho-beta-D-ribosyl)imidazole-4-carboxamide = 5-formamido-1-(5-phospho-D-ribosyl)imidazole-4-carboxamide + (6S)-5,6,7,8-tetrahydrofolate. The catalysed reaction is IMP + H2O = 5-formamido-1-(5-phospho-D-ribosyl)imidazole-4-carboxamide. Its pathway is purine metabolism; IMP biosynthesis via de novo pathway; 5-formamido-1-(5-phospho-D-ribosyl)imidazole-4-carboxamide from 5-amino-1-(5-phospho-D-ribosyl)imidazole-4-carboxamide (10-formyl THF route): step 1/1. It participates in purine metabolism; IMP biosynthesis via de novo pathway; IMP from 5-formamido-1-(5-phospho-D-ribosyl)imidazole-4-carboxamide: step 1/1. In Lacticaseibacillus paracasei (strain ATCC 334 / BCRC 17002 / CCUG 31169 / CIP 107868 / KCTC 3260 / NRRL B-441) (Lactobacillus paracasei), this protein is Bifunctional purine biosynthesis protein PurH.